The sequence spans 109 residues: Large ribosomal subunit protein uL22 (109 aa).

The protein belongs to the universal ribosomal protein uL22 family. As to quaternary structure, part of the 50S ribosomal subunit.

Its function is as follows. This protein binds specifically to 23S rRNA; its binding is stimulated by other ribosomal proteins, e.g. L4, L17, and L20. It is important during the early stages of 50S assembly. It makes multiple contacts with different domains of the 23S rRNA in the assembled 50S subunit and ribosome. In terms of biological role, the globular domain of the protein is located near the polypeptide exit tunnel on the outside of the subunit, while an extended beta-hairpin is found that lines the wall of the exit tunnel in the center of the 70S ribosome. The polypeptide is Large ribosomal subunit protein uL22 (Ralstonia pickettii (strain 12J)).